We begin with the raw amino-acid sequence, 209 residues long: ATP-dependent Clp protease proteolytic subunit (209 aa).

S106 functions as the Nucleophile in the catalytic mechanism. H131 is an active-site residue.

The protein belongs to the peptidase S14 family. In terms of assembly, fourteen ClpP subunits assemble into 2 heptameric rings which stack back to back to give a disk-like structure with a central cavity, resembling the structure of eukaryotic proteasomes.

The protein localises to the cytoplasm. It carries out the reaction Hydrolysis of proteins to small peptides in the presence of ATP and magnesium. alpha-casein is the usual test substrate. In the absence of ATP, only oligopeptides shorter than five residues are hydrolyzed (such as succinyl-Leu-Tyr-|-NHMec, and Leu-Tyr-Leu-|-Tyr-Trp, in which cleavage of the -Tyr-|-Leu- and -Tyr-|-Trp bonds also occurs).. Cleaves peptides in various proteins in a process that requires ATP hydrolysis. Has a chymotrypsin-like activity. Plays a major role in the degradation of misfolded proteins. The protein is ATP-dependent Clp protease proteolytic subunit of Brucella suis biovar 1 (strain 1330).